Here is a 346-residue protein sequence, read N- to C-terminus: KH domain-containing, RNA-binding, signal transduction-associated protein 2 (346 aa).

The KH domain maps to 65–131 (LIPVQQYPKF…AKYAHLSNDL (67 aa)). Residues 175-291 (LSYLNGSDDP…SYESYDDNYS (117 aa)) are disordered. Residues 195-224 (LRLTSTASPRGRGSAAPPAPPGRGAAAPRG) are compositionally biased toward low complexity. Over residues 268–287 (YGYDDGYDGEYDDQSYESYD) the composition is skewed to acidic residues.

This sequence belongs to the KHDRBS family.

The protein localises to the nucleus. Its function is as follows. RNA-binding protein that plays a role in the regulation of alternative splicing. This chain is KH domain-containing, RNA-binding, signal transduction-associated protein 2 (khdrbs2), found in Danio rerio (Zebrafish).